Consider the following 298-residue polypeptide: MSIRSLGYMGFAVSDVAAWRSFLTQKLGLMEAGTTDNGDLFRIDSRAWRIAVQQGEVDDLAFAGYEVADAAGLAQMADKLKQAGIAVTTGDASLARRRGVTGLITFADPFGLPLEIYYGASEVFEKPFLPGAAVSGFLTGEQGLGHFVRCVPDSDKALAFYTDVLGFQLSDVIDMKMGPDVTVPAYFLHCNERHHTLAIAAFPLPKRIHHFMLEVASLDDVGFAFDRVDADGLITSTLGRHTNDHMVSFYASTPSGVEVEYGWSARTVDRSWVVVRHDSPSMWGHKSVRDKAAARNKA.

VOC domains lie at 5–119 (SLGY…IYYG) and 143–264 (GLGH…YGWS). H146, H210, and E260 together coordinate Fe cation.

Belongs to the extradiol ring-cleavage dioxygenase family. As to quaternary structure, homooctamer. The enzyme is composed of two planar tetramers rotated at 45 degrees relative to each other, with a channel in the middle. Fe(2+) serves as cofactor.

The enzyme catalyses biphenyl-2,3-diol + O2 = 2-hydroxy-6-oxo-6-phenylhexa-2,4-dienoate + H(+). Its pathway is xenobiotic degradation; biphenyl degradation; 2-hydroxy-2,4-pentadienoate and benzoate from biphenyl: step 3/4. Functionally, shows a preference for catechols with groups immediately adjacent to the hydroxyl substituents. This chain is Biphenyl-2,3-diol 1,2-dioxygenase (bphC), found in Paraburkholderia xenovorans (strain LB400).